The primary structure comprises 263 residues: Hydroxyethylthiazole kinase (263 aa).

Methionine 41 provides a ligand contact to substrate. ATP contacts are provided by arginine 117 and serine 163. Glycine 190 lines the substrate pocket.

This sequence belongs to the Thz kinase family. Requires Mg(2+) as cofactor.

The catalysed reaction is 5-(2-hydroxyethyl)-4-methylthiazole + ATP = 4-methyl-5-(2-phosphooxyethyl)-thiazole + ADP + H(+). It participates in cofactor biosynthesis; thiamine diphosphate biosynthesis; 4-methyl-5-(2-phosphoethyl)-thiazole from 5-(2-hydroxyethyl)-4-methylthiazole: step 1/1. Catalyzes the phosphorylation of the hydroxyl group of 4-methyl-5-beta-hydroxyethylthiazole (THZ). The chain is Hydroxyethylthiazole kinase from Lactiplantibacillus plantarum (strain ATCC BAA-793 / NCIMB 8826 / WCFS1) (Lactobacillus plantarum).